The sequence spans 802 residues: Oligophrenin-1 (802 aa).

A PH domain is found at 265-368; the sequence is QPTIEGYLYT…WMEAMDGKEP (104 aa). In terms of domain architecture, Rho-GAP spans 380–564; sequence MELNEVGFKF…ILIEHFGKIY (185 aa). Disordered regions lie at residues 569 to 589, 607 to 770, and 783 to 802; these read EESA…HKPI, LDES…NAGE, and FETA…GDES. Residues 616-627 show a composition bias toward polar residues; sequence HQTPNGTITSSI. Residues 716–732 are compositionally biased toward basic and acidic residues; sequence HHKEGDADSFSKVRPPG.

As to quaternary structure, interacts with HOMER1. Interacts with AMPA receptor complexes. Interacts with SH3GL2 (endophilin-A1). Interacts (via C-terminus) with NR1D1.

It is found in the postsynapse. The protein localises to the presynapse. It localises to the cell projection. Its subcellular location is the axon. The protein resides in the dendritic spine. It is found in the dendrite. The protein localises to the cytoplasm. Its function is as follows. Stimulates GTP hydrolysis of members of the Rho family. Its action on RHOA activity and signaling is implicated in growth and stabilization of dendritic spines, and therefore in synaptic function. Critical for the stabilization of AMPA receptors at postsynaptic sites. Critical for the regulation of synaptic vesicle endocytosis at pre-synaptic terminals. Required for the localization of NR1D1 to dendrites, can suppress its repressor activity and protect it from proteasomal degradation. The sequence is that of Oligophrenin-1 (OPHN1) from Pan troglodytes (Chimpanzee).